We begin with the raw amino-acid sequence, 344 residues long: 4-dimethylallyltryptophan N-methyltransferase easF (344 aa).

Belongs to the methyltransferase superfamily. In terms of assembly, homodimer.

It carries out the reaction 4-(3-methylbut-2-enyl)-L-tryptophan + S-adenosyl-L-methionine = 4-(3-methylbut-2-enyl)-L-abrine + S-adenosyl-L-homocysteine + H(+). Its pathway is alkaloid biosynthesis; ergot alkaloid biosynthesis. 4-dimethylallyltryptophan N-methyltransferase; part of the gene cluster that mediates the biosynthesis of fungal ergot alkaloid. DmaW catalyzes the first step of ergot alkaloid biosynthesis by condensing dimethylallyl diphosphate (DMAP) and tryptophan to form 4-dimethylallyl-L-tryptophan. The second step is catalyzed by the methyltransferase easF that methylates 4-dimethylallyl-L-tryptophan in the presence of S-adenosyl-L-methionine, resulting in the formation of 4-dimethylallyl-L-abrine. The catalase easC and the FAD-dependent oxidoreductase easE then transform 4-dimethylallyl-L-abrine to chanoclavine-I which is further oxidized by easD in the presence of NAD(+), resulting in the formation of chanoclavine-I aldehyde. Agroclavine dehydrogenase easG then mediates the conversion of chanoclavine-I aldehyde to agroclavine via a non-enzymatic adduct reaction: the substrate is an iminium intermediate that is formed spontaneously from chanoclavine-I aldehyde in the presence of glutathione. The presence of easA is not required to complete this reaction. Further conversion of agroclavine to paspalic acid is a two-step process involving oxidation of agroclavine to elymoclavine and of elymoclavine to paspalic acid, the second step being performed by the elymoclavine oxidase cloA. Paspalic acid is then further converted to D-lysergic acid. Ergopeptines are assembled from D-lysergic acid and three different amino acids by the D-lysergyl-peptide-synthetases composed each of a monomudular and a trimodular nonribosomal peptide synthetase subunit. LpsB and lpsC encode the monomodular subunits responsible for D-lysergic acid activation and incorporation into the ergopeptine backbone. LpsA1 and A2 subunits encode the trimodular nonribosomal peptide synthetase assembling the tripeptide portion of ergopeptines. LpsA1 is responsible for formation of the major ergopeptine, ergotamine, and lpsA2 for alpha-ergocryptine, the minor ergopeptine of the total alkaloid mixture elaborated by C.purpurea. D-lysergyl-tripeptides are assembled by the nonribosomal peptide synthetases and released as N-(D-lysergyl-aminoacyl)-lactams. Cyclolization of the D-lysergyl-tripeptides is performed by the Fe(2+)/2-ketoglutarate-dependent dioxygenase easH which introduces a hydroxyl group into N-(D-lysergyl-aminoacyl)-lactam at alpha-C of the aminoacyl residue followed by spontaneous condensation with the terminal lactam carbonyl group. The chain is 4-dimethylallyltryptophan N-methyltransferase easF from Claviceps purpurea (strain 20.1) (Ergot fungus).